Consider the following 248-residue polypeptide: Probable transcriptional regulatory protein SO_2432 (248 aa).

It belongs to the TACO1 family.

Its subcellular location is the cytoplasm. The protein is Probable transcriptional regulatory protein SO_2432 of Shewanella oneidensis (strain ATCC 700550 / JCM 31522 / CIP 106686 / LMG 19005 / NCIMB 14063 / MR-1).